A 136-amino-acid polypeptide reads, in one-letter code: Large ribosomal subunit protein eL27B (136 aa).

This sequence belongs to the eukaryotic ribosomal protein eL27 family. As to quaternary structure, component of the large ribosomal subunit (LSU). Mature yeast ribosomes consist of a small (40S) and a large (60S) subunit. The 40S small subunit contains 1 molecule of ribosomal RNA (18S rRNA) and 33 different proteins (encoded by 57 genes). The large 60S subunit contains 3 rRNA molecules (25S, 5.8S and 5S rRNA) and 46 different proteins (encoded by 81 genes).

Its subcellular location is the cytoplasm. Functionally, component of the ribosome, a large ribonucleoprotein complex responsible for the synthesis of proteins in the cell. The small ribosomal subunit (SSU) binds messenger RNAs (mRNAs) and translates the encoded message by selecting cognate aminoacyl-transfer RNA (tRNA) molecules. The large subunit (LSU) contains the ribosomal catalytic site termed the peptidyl transferase center (PTC), which catalyzes the formation of peptide bonds, thereby polymerizing the amino acids delivered by tRNAs into a polypeptide chain. The nascent polypeptides leave the ribosome through a tunnel in the LSU and interact with protein factors that function in enzymatic processing, targeting, and the membrane insertion of nascent chains at the exit of the ribosomal tunnel. The chain is Large ribosomal subunit protein eL27B from Saccharomyces cerevisiae (strain ATCC 204508 / S288c) (Baker's yeast).